Reading from the N-terminus, the 144-residue chain is D-aminoacyl-tRNA deacylase (144 aa).

The Gly-cisPro motif, important for rejection of L-amino acids motif lies at 137 to 138; sequence GP.

This sequence belongs to the DTD family. As to quaternary structure, homodimer.

It localises to the cytoplasm. It carries out the reaction glycyl-tRNA(Ala) + H2O = tRNA(Ala) + glycine + H(+). The catalysed reaction is a D-aminoacyl-tRNA + H2O = a tRNA + a D-alpha-amino acid + H(+). An aminoacyl-tRNA editing enzyme that deacylates mischarged D-aminoacyl-tRNAs. Also deacylates mischarged glycyl-tRNA(Ala), protecting cells against glycine mischarging by AlaRS. Acts via tRNA-based rather than protein-based catalysis; rejects L-amino acids rather than detecting D-amino acids in the active site. By recycling D-aminoacyl-tRNA to D-amino acids and free tRNA molecules, this enzyme counteracts the toxicity associated with the formation of D-aminoacyl-tRNA entities in vivo and helps enforce protein L-homochirality. This Acinetobacter baumannii (strain SDF) protein is D-aminoacyl-tRNA deacylase.